An 878-amino-acid chain; its full sequence is Serine/threonine-protein kinase N3 (878 aa).

3 consecutive REM-1 domains span residues 2–77, 86–165, and 169–238; these read EHRK…QVLL, SEPQ…SGSP, and PDLL…RLPP. Ser-164 bears the Phosphoserine mark. The disordered stretch occupies residues 461 to 525; sequence PNTASPPKGR…TPCTKRPHMD (65 aa). In terms of domain architecture, Protein kinase spans 548–807; the sequence is FRCLAVLGRG…AEEIKVQPFF (260 aa). Residues 554–562 and Lys-577 each bind ATP; that span reads LGRGHFGKV. The active-site Proton acceptor is the Asp-673. Phosphothreonine is present on residues Thr-707, Thr-711, and Thr-849. Residues 808–878 enclose the AGC-kinase C-terminal domain; that stretch reads RTTNWQALLA…DFVSEQFLES (71 aa).

Belongs to the protein kinase superfamily. AGC Ser/Thr protein kinase family. PKC subfamily. Autophosphorylated.

The protein resides in the nucleus. It localises to the cytoplasm. Its subcellular location is the perinuclear region. The catalysed reaction is L-seryl-[protein] + ATP = O-phospho-L-seryl-[protein] + ADP + H(+). It catalyses the reaction L-threonyl-[protein] + ATP = O-phospho-L-threonyl-[protein] + ADP + H(+). With respect to regulation, two specific sites, Thr-707 (activation loop of the kinase domain) and Thr-849 (turn motif), need to be phosphorylated for its full activation. In terms of biological role, contributes to invasiveness in malignant prostate cancer. This Mus musculus (Mouse) protein is Serine/threonine-protein kinase N3 (Pkn3).